The following is a 535-amino-acid chain: CTP synthase (535 aa).

The segment at 1-267 (MTKYIFVTGG…DSLVCSHLKL (267 aa)) is amidoligase domain. Ser-13 is a CTP binding site. UTP is bound at residue Ser-13. Position 14–19 (14–19 (SLGKGI)) interacts with ATP. Tyr-54 contributes to the L-glutamine binding site. Asp-71 serves as a coordination point for ATP. Mg(2+) is bound by residues Asp-71 and Glu-141. CTP contacts are provided by residues 148-150 (DIE), 188-193 (KTKPTQ), and Lys-224. UTP-binding positions include 188–193 (KTKPTQ) and Lys-224. In terms of domain architecture, Glutamine amidotransferase type-1 spans 292–534 (TIALVGKYVE…VHASLKTSEK (243 aa)). Gly-354 lines the L-glutamine pocket. Cys-381 (nucleophile; for glutamine hydrolysis) is an active-site residue. Residues 382–385 (LGMQ), Glu-405, and Arg-462 contribute to the L-glutamine site. Residues His-507 and Glu-509 contribute to the active site.

The protein belongs to the CTP synthase family. In terms of assembly, homotetramer.

It carries out the reaction UTP + L-glutamine + ATP + H2O = CTP + L-glutamate + ADP + phosphate + 2 H(+). The catalysed reaction is L-glutamine + H2O = L-glutamate + NH4(+). It catalyses the reaction UTP + NH4(+) + ATP = CTP + ADP + phosphate + 2 H(+). It participates in pyrimidine metabolism; CTP biosynthesis via de novo pathway; CTP from UDP: step 2/2. Allosterically activated by GTP, when glutamine is the substrate; GTP has no effect on the reaction when ammonia is the substrate. The allosteric effector GTP functions by stabilizing the protein conformation that binds the tetrahedral intermediate(s) formed during glutamine hydrolysis. Inhibited by the product CTP, via allosteric rather than competitive inhibition. Its function is as follows. Catalyzes the ATP-dependent amination of UTP to CTP with either L-glutamine or ammonia as the source of nitrogen. Regulates intracellular CTP levels through interactions with the four ribonucleotide triphosphates. This is CTP synthase from Bacillus licheniformis (strain ATCC 14580 / DSM 13 / JCM 2505 / CCUG 7422 / NBRC 12200 / NCIMB 9375 / NCTC 10341 / NRRL NRS-1264 / Gibson 46).